Reading from the N-terminus, the 402-residue chain is MSVDIRPTPPAQDSARQNVTLQIVSVVMFTFIGYLTIGIPLAVLPGYVHDDLGYGSVLAGLVISLQYLATLLARPYAGRVIDGLGPKRAVLYGMAGSAASGLFMLLSVAIQGWPALSLASLLVGRLVLGAAESLVGSAAIGWGIGRVGAPHTAKVISWNGIASYGAIALGAPLGVLLVQWLGLWSMGASIVLLGALGFALAWPKLPAPLVHGERLPFHHVLGRVTPHGMGLALGAIGFGTIATFITLYYASRGWANAVLCLSAFGGCFIGARLLFANSINRLGGFRVAIICLGVESLGLLLLWSAPNPWVGLAGAALTGFGFSLVFPAFGVEAVNLVPASNRGAALGAYSLFVDLSLGITGPLVGFVANLFGFRSMFLFACLASLGGLALAVALHRRSRRPG.

The next 12 membrane-spanning stretches (helical) occupy residues 23–43, 52–72, 90–110, 121–141, 158–178, 180–200, 228–248, 255–275, 282–302, 309–329, 351–371, and 375–395; these read IVSV…PLAV, LGYG…ATLL, VLYG…SVAI, LLVG…AAIG, WNGI…VLLV, WLGL…GFAL, GMGL…ITLY, ANAV…RLLF, LGGF…LLLL, WVGL…FPAF, LFVD…ANLF, and SMFL…VALH.

Belongs to the major facilitator superfamily. YhhS family.

The protein localises to the cell inner membrane. This is an uncharacterized protein from Pseudomonas aeruginosa (strain ATCC 15692 / DSM 22644 / CIP 104116 / JCM 14847 / LMG 12228 / 1C / PRS 101 / PAO1).